The primary structure comprises 387 residues: MKQAVIVDCIRTPMGRSKAGVFRNVRAETLSAELMKGLLLRNPQLDPNLIEDVIWGCVQQTLEQGFNIARNASLLAGIPKTAGAVTVNRLCGSSMDAIHQAARAIMTGMGDTFIIGGVEHMGHVPMSHGVDFHPGLANNVAKASGMMGLTAEMLGKLHGITREQQDAFAVRSHQRAYAATIEGRFAKEIYGIEGHDANGALIKVLQDEVIRPETTMESLAALRPVFDPVNGTVTAGTSSALSDGASAMLIMEESKARALSLPIRARIRSMAVAGCDAAIMGYGPVPATQKALARAGITVADLDVIELNEAFAAQSLPCVKDLGLADVVDDKINLNGGAIALGHPLGCSGARISTTLINLMEDKDATLGLATMCIGLGQGIATVFERV.

The Acyl-thioester intermediate role is filled by cysteine 91. Residues histidine 343 and cysteine 373 each act as proton acceptor in the active site.

The protein belongs to the thiolase-like superfamily. Thiolase family. In terms of assembly, heterotetramer of two alpha chains (FadB) and two beta chains (FadA).

The protein resides in the cytoplasm. It carries out the reaction an acyl-CoA + acetyl-CoA = a 3-oxoacyl-CoA + CoA. Its pathway is lipid metabolism; fatty acid beta-oxidation. Functionally, catalyzes the final step of fatty acid oxidation in which acetyl-CoA is released and the CoA ester of a fatty acid two carbons shorter is formed. This is 3-ketoacyl-CoA thiolase from Shewanella sp. (strain W3-18-1).